Consider the following 450-residue polypeptide: Methionine aminopeptidase 2-2 (450 aa).

Basic and acidic residues-rich tracts occupy residues 1 to 10 (MGAKISEDHP) and 30 to 39 (RGAHLSRDGD). Positions 1–100 (MGAKISEDHP…PPRVPLSELF (100 aa)) are disordered. Positions 47–56 (GDDDDDDDEG) are enriched in acidic residues. Over residues 69–86 (KKKKKKRKPKKKKAKKAT) the composition is skewed to basic residues. Substrate is bound at residue histidine 211. 3 residues coordinate a divalent metal cation: aspartate 232, aspartate 243, and histidine 302. Substrate is bound at residue histidine 310. 2 residues coordinate a divalent metal cation: glutamate 335 and glutamate 431.

It belongs to the peptidase M24A family. Methionine aminopeptidase eukaryotic type 2 subfamily. Requires Co(2+) as cofactor. Zn(2+) is required as a cofactor. It depends on Mn(2+) as a cofactor. The cofactor is Fe(2+).

The protein localises to the cytoplasm. The catalysed reaction is Release of N-terminal amino acids, preferentially methionine, from peptides and arylamides.. Its function is as follows. Cotranslationally removes the N-terminal methionine from nascent proteins. The N-terminal methionine is often cleaved when the second residue in the primary sequence is small and uncharged (Met-Ala-, Cys, Gly, Pro, Ser, Thr, or Val). The polypeptide is Methionine aminopeptidase 2-2 (Fusarium vanettenii (strain ATCC MYA-4622 / CBS 123669 / FGSC 9596 / NRRL 45880 / 77-13-4) (Fusarium solani subsp. pisi)).